The chain runs to 198 residues: Inosine triphosphate pyrophosphatase (198 aa).

Alanine 2 carries the N-acetylalanine modification. An ITP-binding site is contributed by 14–19 (TGNAKK). Glutamate 44 provides a ligand contact to Mg(2+). ITP is bound by residues lysine 56, 72 to 73 (DT), and lysine 89. Serine 146 carries the post-translational modification Phosphoserine. Residues 149–152 (FGWD), lysine 172, and 177–178 (HR) each bind ITP.

Belongs to the HAM1 NTPase family. Homodimer. The cofactor is Mg(2+). Requires Mn(2+) as cofactor.

The protein localises to the cytoplasm. It carries out the reaction ITP + H2O = IMP + diphosphate + H(+). The enzyme catalyses dITP + H2O = dIMP + diphosphate + H(+). It catalyses the reaction XTP + H2O = XMP + diphosphate + H(+). The catalysed reaction is N(6)-hydroxy-dATP + H2O = N(6)-hydroxy-dAMP + diphosphate + H(+). Its function is as follows. Pyrophosphatase that hydrolyzes the non-canonical purine nucleotides inosine triphosphate (ITP), deoxyinosine triphosphate (dITP) as well as 2'-deoxy-N-6-hydroxylaminopurine triphosphate (dHAPTP) and xanthosine 5'-triphosphate (XTP) to their respective monophosphate derivatives. The enzyme does not distinguish between the deoxy- and ribose forms. Probably excludes non-canonical purines from RNA and DNA precursor pools, thus preventing their incorporation into RNA and DNA and avoiding chromosomal lesions. In Rattus norvegicus (Rat), this protein is Inosine triphosphate pyrophosphatase (Itpa).